The sequence spans 361 residues: Phenylalanine--tRNA ligase alpha subunit (361 aa).

Glu260 contacts Mg(2+).

Belongs to the class-II aminoacyl-tRNA synthetase family. Phe-tRNA synthetase alpha subunit type 1 subfamily. In terms of assembly, tetramer of two alpha and two beta subunits. Mg(2+) is required as a cofactor.

It localises to the cytoplasm. It catalyses the reaction tRNA(Phe) + L-phenylalanine + ATP = L-phenylalanyl-tRNA(Phe) + AMP + diphosphate + H(+). The polypeptide is Phenylalanine--tRNA ligase alpha subunit (Chelativorans sp. (strain BNC1)).